The sequence spans 2131 residues: Nonribosomal peptide synthetase criC (2131 aa).

Residues 13 to 407 form an adenylation 1 region; the sequence is FSQQCFQHPD…GRRDRVTKIR (395 aa). The region spanning 525 to 601 is the Carrier 1 domain; that stretch reads SGPLTIDQTI…ALVEKNRHET (77 aa). Serine 562 is subject to O-(pantetheine 4'-phosphoryl)serine. A disordered region spans residues 598–627; that stretch reads RHETENRPDSSAFATRTPEESSMPTQGPVT. The tract at residues 625-1018 is condensation 1; it reads PVTPLQKRMV…YMSLLDAFLD (394 aa). The segment at 1069–1447 is adenylation 2; it reads ASLHPTHIAV…GRKDRQVKVR (379 aa). A Carrier 2 domain is found at 1569 to 1647; that stretch reads SSEAHLEKLI…DLITLVAQQQ (79 aa). The residue at position 1607 (serine 1607) is an O-(pantetheine 4'-phosphoryl)serine. Positions 1688-2086 are condensation 2; sequence SQSQSTFNVP…EALLLECFRM (399 aa).

It belongs to the NRP synthetase family. Pantetheine 4'-phosphate is required as a cofactor.

It carries out the reaction L-tryptophan + L-alanine + 2 ATP = cyclo(L-tryptophyl-L-alanyl) + 2 ADP + 2 phosphate + 2 H(+). The protein operates within secondary metabolite biosynthesis. It functions in the pathway alkaloid biosynthesis. Its function is as follows. Nonribosomal peptide synthetase; part of the gene cluster that mediates the biosynthesis of echinulin family alkaloid. The pathway begins with the biosynthesis of the cyclic dipeptide cyclo-L-Trp-L-Ala (cyclo-TA) by the NRPS criC via condensation of L-alanine and L-tryptophan. The prenyltransferase criA then catalyzes the first prenylation step, a reverse prenylation reaction at C2, to yield preechinulin. Preechinulin is the substrate of the cytochrome P450 monooxygenase criE that catalyzes the formation of the double bond between C10 and C11 to produce neoechulin A. The unique prenyltransferase criF functions as a competitive enzyme with criE for preechinulin metabolization and uses preechinulin for effective regiospecific prenylations. Preechinulin is prenylated by criF at C5 or C7. C7-prenylation leads to accumulation of tardioxopiperazine B without further modification by criF. In contrast, the C5-prenylated tardioxopiperazine A can be prenylated again by criF, predominantly at C7 to form echinulin or less frequently at C4 to give variecolorin L. CriF also accepts neoechilunin A to produce varlecolorin G (prenylation at C5) or isoechinulin A (prenylation at C7). CriF further converts isoechinulin A into dehydroechinulin. Moreover, a yet unidentified enzyme can also convert neoechilunin A into neoechilunin B by introducing a double bond between positions C14 and C17 and thus provides a further substrate to criF for C5 and C7 prenylation. This Aspergillus cristatus (Chinese Fuzhuan brick tea-fermentation fungus) protein is Nonribosomal peptide synthetase criC.